The chain runs to 328 residues: uncharacterized protein (328 aa).

This is an uncharacterized protein from Schizosaccharomyces pombe (strain 972 / ATCC 24843) (Fission yeast).